Reading from the N-terminus, the 381-residue chain is DNA dC-&gt;dU-editing enzyme APOBEC-3G (381 aa).

The segment at 1–62 is essential for cytoplasmic localization; sequence MKPQTRNTVV…ANIFQGQVSF (62 aa). CMP/dCMP-type deaminase domains lie at 29–143 and 211–325; these read HRNT…SQTG and GQHQ…LRRL. At Thr32 the chain carries Phosphothreonine; by PKA. Zn(2+)-binding residues include His67, Cys98, and Cys101. Positions 206–333 are necessary for homooligomerization; sequence DPSVLGQHQS…RLDRAGTPIS (128 aa). Residues 210 to 212 form an interaction with DNA region; the sequence is LGQ. His254 lines the Zn(2+) pocket. Residue Glu256 is the Proton donor of the active site. Positions 285 and 288 each coordinate Zn(2+). Positions 310–317 are interaction with DNA; sequence RIYDYQRG.

This sequence belongs to the cytidine and deoxycytidylate deaminase family. As to quaternary structure, homodimer. Homooligomer. Can bind RNA to form ribonucleoprotein complexes of high-molecular-mass (HMM) or low-molecular-mass (LMM). HMM is inactive and heterogeneous in protein composition because of binding nonselectively to cellular RNAs, which in turn are associated with variety of cellular proteins. The LMM form which is enzymatically active has few or no RNAs associated. Its ability to form homooligomer is distinct from its ability to assemble into HMM. Interacts with APOBEC3B, APOBEC3F, MOV10, AGO2, EIF4E, EIF4ENIF1, DCP2 and DDX6 in an RNA-dependent manner. Interacts with AGO1, AGO3 and PKA/PRKACA. It depends on Zn(2+) as a cofactor.

It is found in the cytoplasm. It localises to the nucleus. Its subcellular location is the P-body. The catalysed reaction is a 2'-deoxycytidine in single-stranded DNA + H2O + H(+) = a 2'-deoxyuridine in single-stranded DNA + NH4(+). In terms of biological role, DNA deaminase (cytidine deaminase) which acts as an inhibitor of retrovirus replication and retrotransposon mobility. After the penetration of retroviral nucleocapsids into target cells of infection and the initiation of reverse transcription, it can induce the conversion of cytosine to uracil in the minus-sense single-strand viral DNA, leading to G-to-A hypermutations in the subsequent plus-strand viral DNA. The resultant detrimental levels of mutations in the proviral genome, along with a deamination-independent mechanism that works prior to the proviral integration, together exert efficient antiretroviral effects in infected target cells. Selectively targets single-stranded DNA and does not deaminate double-stranded DNA or single- or double-stranded RNA. The chain is DNA dC-&gt;dU-editing enzyme APOBEC-3G (APOBEC3G) from Lagothrix lagotricha (Brown woolly monkey).